Reading from the N-terminus, the 171-residue chain is Tetratricopeptide repeat protein 9C (171 aa).

3 TPR repeats span residues 8–41 (AQVYKEEGNQRYREGKYRDAVSRYHRALLQLRGL), 72–107 (THCYNNLAACLLQMEPVNYERVREYSQKVLERQPDN), and 108–141 (AKALYRAGVAFFHLQDYDRARHHLLAAVNRQPKD).

This sequence belongs to the TTC9 family.

This is Tetratricopeptide repeat protein 9C (Ttc9c) from Mus musculus (Mouse).